Reading from the N-terminus, the 361-residue chain is MLWIMRFSGLFSAALVIIVLSPSLQSFPPAEAIRSSHLDAYLRFPSSDPPPHRFSFRKAPVFRNAADCAAADIDSGVCNPSLVHVAITLDFEYLRGSIAAVHSILKHSSCPESVFFHFLVSETDLESLIRSTFPELKLKVYYFDPEIVRTLISTSVRQALEQPLNYARNYLADLLEPCVRRVIYLDSDLIVVDDIAKLWMTKLGSKTIGAPEYCHANFTKYFTPAFWSDERFSGAFSGRKPCYFNTGVMVMDLERWRRVGYTEVIEKWMEIQKSDRIYELGSLPPFLLVFAGEVAPIEHRWNQHGLGGDNVRGSCRDLHPGPVSLLHWSGSGKPWFRLDSRRPCPLDTLWAPYDLYGHYSR.

Residues 1–21 (MLWIMRFSGLFSAALVIIVLS) form a helical; Signal-anchor for type II membrane protein membrane-spanning segment. Topologically, residues 22–361 (PSLQSFPPAE…PYDLYGHYSR (340 aa)) are lumenal. The N-linked (GlcNAc...) asparagine glycan is linked to Asn217.

The protein belongs to the glycosyltransferase 8 family.

Its subcellular location is the golgi apparatus membrane. It participates in glycan metabolism; pectin biosynthesis. Functionally, may be involved in pectin and/or xylans biosynthesis in cell walls. The protein is Probable galacturonosyltransferase-like 7 (GATL7) of Arabidopsis thaliana (Mouse-ear cress).